A 395-amino-acid polypeptide reads, in one-letter code: NAD(P)H-quinone oxidoreductase subunit H, chloroplastic (395 aa).

Belongs to the complex I 49 kDa subunit family. As to quaternary structure, NDH is composed of at least 16 different subunits, 5 of which are encoded in the nucleus.

The protein localises to the plastid. It is found in the chloroplast thylakoid membrane. It catalyses the reaction a plastoquinone + NADH + (n+1) H(+)(in) = a plastoquinol + NAD(+) + n H(+)(out). The enzyme catalyses a plastoquinone + NADPH + (n+1) H(+)(in) = a plastoquinol + NADP(+) + n H(+)(out). Its function is as follows. NDH shuttles electrons from NAD(P)H:plastoquinone, via FMN and iron-sulfur (Fe-S) centers, to quinones in the photosynthetic chain and possibly in a chloroplast respiratory chain. The immediate electron acceptor for the enzyme in this species is believed to be plastoquinone. Couples the redox reaction to proton translocation, and thus conserves the redox energy in a proton gradient. This Chloranthus spicatus (Chulantree) protein is NAD(P)H-quinone oxidoreductase subunit H, chloroplastic.